Here is a 370-residue protein sequence, read N- to C-terminus: Quinolinate synthase (370 aa).

His62 and Ser83 together coordinate iminosuccinate. Residue Cys128 coordinates [4Fe-4S] cluster. Iminosuccinate contacts are provided by residues Tyr154 to Asn156 and Ser171. Residue Cys215 participates in [4Fe-4S] cluster binding. Iminosuccinate is bound by residues His241–Glu243 and Thr258. Cys312 serves as a coordination point for [4Fe-4S] cluster.

It belongs to the quinolinate synthase family. Type 1 subfamily. It depends on [4Fe-4S] cluster as a cofactor.

The protein resides in the cytoplasm. The catalysed reaction is iminosuccinate + dihydroxyacetone phosphate = quinolinate + phosphate + 2 H2O + H(+). It functions in the pathway cofactor biosynthesis; NAD(+) biosynthesis; quinolinate from iminoaspartate: step 1/1. Catalyzes the condensation of iminoaspartate with dihydroxyacetone phosphate to form quinolinate. The chain is Quinolinate synthase from Neisseria gonorrhoeae (strain ATCC 700825 / FA 1090).